The primary structure comprises 213 residues: Holliday junction branch migration complex subunit RuvA (213 aa).

The domain I stretch occupies residues 1-63 (MIGMLTGRVA…EDAFKLYGFL (63 aa)). Residues 64-142 (DDIDRAWFVH…PTGRSFSIGL (79 aa)) form a domain II region. Residues 143–160 (PVHSDDGTTGGAPVAPAG) are flexible linker. The segment at 161–213 (GDSLAREDAVSALVNLGYNESQARQAVAKILRDADSEAPLGDVIRLSLKELAA) is domain III.

The protein belongs to the RuvA family. As to quaternary structure, homotetramer. Forms an RuvA(8)-RuvB(12)-Holliday junction (HJ) complex. HJ DNA is sandwiched between 2 RuvA tetramers; dsDNA enters through RuvA and exits via RuvB. An RuvB hexamer assembles on each DNA strand where it exits the tetramer. Each RuvB hexamer is contacted by two RuvA subunits (via domain III) on 2 adjacent RuvB subunits; this complex drives branch migration. In the full resolvosome a probable DNA-RuvA(4)-RuvB(12)-RuvC(2) complex forms which resolves the HJ.

The protein localises to the cytoplasm. Its function is as follows. The RuvA-RuvB-RuvC complex processes Holliday junction (HJ) DNA during genetic recombination and DNA repair, while the RuvA-RuvB complex plays an important role in the rescue of blocked DNA replication forks via replication fork reversal (RFR). RuvA specifically binds to HJ cruciform DNA, conferring on it an open structure. The RuvB hexamer acts as an ATP-dependent pump, pulling dsDNA into and through the RuvAB complex. HJ branch migration allows RuvC to scan DNA until it finds its consensus sequence, where it cleaves and resolves the cruciform DNA. The protein is Holliday junction branch migration complex subunit RuvA of Maricaulis maris (strain MCS10) (Caulobacter maris).